A 380-amino-acid chain; its full sequence is MGSGCRIECIFFSEFHPTLGPKITYQVPEDFISRELFDTVQVYIITKPELQNKLITVTAMEKKLIGCPVCIEHKKYSRNALLFNLGFVCDAQAKTCALEPIVKKLAGYLTTLELESSFVSMEESKQKLVPIMTILLEELNASGRCTLPIDESNTIHLKVIEQRPDPPVAQEYDVPVFTKDKEDFFNSQWDLTTQQILPYIDGFRHIQKISAEADVELNLVRIAIQNLLYYGVVTLVSILQYSNVYCPTPKVQDLVDDKSLQEACLSYVTKQGHKRASLRDVFQLYCSLSPGTTVRDLIGRHPQQLQHVDERKLIQFGLMKNLIRRLQKYPVRVTREEQSHPARLYTGCHSYDEICCKTGMSYHELDERLENDPNIIICWK.

The interval 1–133 (MGSGCRIECI…SKQKLVPIMT (133 aa)) is interaction with PDPK1. Arginine 78 provides a ligand contact to GDP. Arginine 78 bears the Asymmetric dimethylarginine mark. Residues lysine 158 and lysine 357 each participate in a glycyl lysine isopeptide (Lys-Gly) (interchain with G-Cter in ubiquitin) cross-link.

Belongs to the NPR2 family. Within the GATOR complex, component of the GATOR1 subcomplex, made of DEPDC5, NPRL2 and NPRL3. GATOR1 mediates the strong interaction of the GATOR complex with small GTPases Rag (RagA/RRAGA, RagB/RRAGB, RagC/RRAGC and/or RagD/RRAGD) heterodimers. GATOR1 interacts with GPR155/LYCHOS; interaction takes place in presence of cholesterol and prevents interaction between GATOR1 and KICSTOR. Interacts with PDPK1. Post-translationally, in the presence of abundant amino acids, ubiquitinated at Lys-158 and Lys-357 via 'Lys-6'-linked ubiquitination by the WDR24 component of the GATOR2 complex, thereby inhibiting the GATOR1 complex and promoting mTORC1 activation. In terms of processing, asymmetric dimethylation at Arg-78 by PRMT1 inhibits the GTPase activator activity of the GATOR1 complex and consequently inducing timely mTORC1 activation under methionine-sufficient conditions. In terms of tissue distribution, most abundant in skeletal muscle, followed by brain, liver and pancreas, with lower amounts in lung, kidney, placenta and heart. Expressed in the frontal lobe cortex as well as in the temporal, parietal, and occipital lobes. Expressed in most lung cancer cell lines tested.

The protein localises to the lysosome membrane. In terms of biological role, catalytic component of the GATOR1 complex, a multiprotein complex that functions as an inhibitor of the amino acid-sensing branch of the mTORC1 pathway. In response to amino acid depletion, the GATOR1 complex has GTPase activating protein (GAP) activity and strongly increases GTP hydrolysis by RagA/RRAGA (or RagB/RRAGB) within heterodimeric Rag complexes, thereby turning them into their inactive GDP-bound form, releasing mTORC1 from lysosomal surface and inhibiting mTORC1 signaling. In the presence of abundant amino acids, the GATOR1 complex is ubiquitinated and inhibited by GATOR2. Within the GATOR1 complex, NPRL2 constitutes the catalytic subunit that mediates the GTPase activator activity and under methionine-sufficient conditions, the GTPase activator activity is inhibited by PRMT1 through methylation and consequently inducing timely mTORC1 activation. Its function is as follows. Suppresses Src-dependent tyrosine phosphorylation and activation of PDPK1 and its downstream signaling. Down-regulates PDPK1 kinase activity by interfering with tyrosine phosphorylation at 'Tyr-9', 'Tyr-373' and 'Tyr-376' residues. May act as a tumor suppressor. Suppresses cell growth and enhances sensitivity to various anticancer drugs. In Homo sapiens (Human), this protein is GATOR1 complex protein NPRL2.